The primary structure comprises 289 residues: ATP synthase gamma chain (289 aa).

This sequence belongs to the ATPase gamma chain family. In terms of assembly, F-type ATPases have 2 components, CF(1) - the catalytic core - and CF(0) - the membrane proton channel. CF(1) has five subunits: alpha(3), beta(3), gamma(1), delta(1), epsilon(1). CF(0) has three main subunits: a, b and c.

The protein resides in the cell membrane. In terms of biological role, produces ATP from ADP in the presence of a proton gradient across the membrane. The gamma chain is believed to be important in regulating ATPase activity and the flow of protons through the CF(0) complex. The chain is ATP synthase gamma chain from Lactococcus lactis subsp. cremoris (strain MG1363).